We begin with the raw amino-acid sequence, 429 residues long: UDP-N-acetylglucosamine 1-carboxyvinyltransferase (429 aa).

Phosphoenolpyruvate is bound at residue 22 to 23 (KN). Arg102 lines the UDP-N-acetyl-alpha-D-glucosamine pocket. Residue Cys126 is the Proton donor of the active site. Cys126 is subject to 2-(S-cysteinyl)pyruvic acid O-phosphothioketal. UDP-N-acetyl-alpha-D-glucosamine-binding positions include 131–135 (RPVDL), 171–174 (KVSV), Asp316, and Ile338.

This sequence belongs to the EPSP synthase family. MurA subfamily.

It localises to the cytoplasm. The enzyme catalyses phosphoenolpyruvate + UDP-N-acetyl-alpha-D-glucosamine = UDP-N-acetyl-3-O-(1-carboxyvinyl)-alpha-D-glucosamine + phosphate. It functions in the pathway cell wall biogenesis; peptidoglycan biosynthesis. Cell wall formation. Adds enolpyruvyl to UDP-N-acetylglucosamine. This is UDP-N-acetylglucosamine 1-carboxyvinyltransferase from Chelativorans sp. (strain BNC1).